A 651-amino-acid chain; its full sequence is MHLEVIVQSYKKSKYYFSHTFYLYKFIVVNSPDMLHISQLGLFLGLFAIVMHSANLIKYTSDPLEAFKTVNRHNWSDEQREHFYDLRNLYTSFCQTNLSLDCFTQILTNVFSWDIRDSQCKSAVNLSPLQNLPRTETKIVLSSTAANKSIIASSFSLFYLLFATLSTYTADPPCVELLPFKILGAQLFDIKLTEESLRMAMSKFSNSNLTRSLTSFTSEIFFNYTSFVYFLLYNTTSCVPSNDQYFKQSPKPINVTTSFGRTIVNFDSILTTTPSSTSASLTSPHIPSTNIPTPEPPPVTKNSTKLHTDTIKVTPNTPTITTQTTESIKKIVKRSDFPRPMYTPTDIPTLTIRLNATIKTEQNTENPKSPPKPTNFENTTIRIPKTFESATVTTNATQKIESTTFTTIGIKEINGNTYSSPKNSIYLKSKSQQSTTKFTDAEHTTPILKFTTWQNTARTYMSHNTEVQNMTDRFQRTTLKSSNELPTIQTLSVTPKQKLPSNVTAKTEVHITNNALPSSNSSYSITEVTKEVKHTRMSASTHEEINHTEIAQITPILNAHTSEKSTTPQRSFTAETFLTTSSKPAILTWSNLLSTTPKEPLTNTSLRWTDHITTQLTTSNRTQSAKLTKANISSQTTNIYPQTITGRSTEV.

The signal sequence occupies residues 1-56 (MHLEVIVQSYKKSKYYFSHTFYLYKFIVVNSPDMLHISQLGLFLGLFAIVMHSANL). N-linked (GlcNAc...) asparagine; by host glycans are attached at residues N74, N97, N147, N208, N223, N234, and N254. The segment covering 275-292 (SSTSASLTSPHIPSTNIP) has biased composition (low complexity). The disordered stretch occupies residues 275 to 303 (SSTSASLTSPHIPSTNIPTPEPPPVTKNS). 11 N-linked (GlcNAc...) asparagine; by host glycosylation sites follow: N302, N355, N378, N395, N469, N502, N520, N546, N603, N620, and N631.

It belongs to the herpesviridae U47 family. As to quaternary structure, part of a gH-gL-gO complex. In terms of processing, a shorter mature protein, gO-80K, is produced probably by proteolytic cleavage. Modified with high mannose-oligosaccharides. Post-translationally, N-glycosylated with complex glycans.

It localises to the virion. The protein localises to the host cell membrane. The protein is 120 kDa Glycoprotein O (U47) of Homo sapiens (Human).